A 446-amino-acid polypeptide reads, in one-letter code: N-succinylarginine dihydrolase (446 aa).

Substrate is bound by residues 19-28, asparagine 110, and 137-138; these read AGLSFGNVAS and HR. The active site involves glutamate 174. Residue arginine 213 participates in substrate binding. Residue histidine 249 is part of the active site. The substrate site is built by aspartate 251 and asparagine 364. The active-site Nucleophile is the cysteine 370.

This sequence belongs to the succinylarginine dihydrolase family. Homodimer.

The catalysed reaction is N(2)-succinyl-L-arginine + 2 H2O + 2 H(+) = N(2)-succinyl-L-ornithine + 2 NH4(+) + CO2. The protein operates within amino-acid degradation; L-arginine degradation via AST pathway; L-glutamate and succinate from L-arginine: step 2/5. Its function is as follows. Catalyzes the hydrolysis of N(2)-succinylarginine into N(2)-succinylornithine, ammonia and CO(2). The chain is N-succinylarginine dihydrolase from Burkholderia thailandensis (strain ATCC 700388 / DSM 13276 / CCUG 48851 / CIP 106301 / E264).